A 156-amino-acid polypeptide reads, in one-letter code: Protein archease-like (156 aa).

Residues aspartate 25, aspartate 155, and isoleucine 156 each contribute to the Ca(2+) site.

It belongs to the archease family.

Its function is as follows. Component of the tRNA-splicing ligase complex required to facilitate the enzymatic turnover of catalytic subunit RtcB. Plays an important role in a RNA repair and splicing pathway which controls axon regeneration in response to peripheral (PNS) and central nervous system (CNS) injury, by activating splicing of Xbp1 to promote axon regeneration in response to axotomy. The sequence is that of Protein archease-like from Drosophila melanogaster (Fruit fly).